The chain runs to 358 residues: Photosystem II protein D1 2 (358 aa).

The next 3 membrane-spanning stretches (helical) occupy residues 28–45 (YVGW…AATI), 117–132 (HFLI…QWEL), and 141–155 (WICV…AAMA). Histidine 117 provides a ligand contact to chlorophyll a. Tyrosine 125 is a pheophytin a binding site. [CaMn4O5] cluster is bound by residues aspartate 169 and glutamate 188. The helical transmembrane segment at 196 to 217 (FHMLGVAGVFGGSLFSAMHGSL) threads the bilayer. Histidine 197 contributes to the chlorophyll a binding site. Residues histidine 214 and 263–264 (SF) contribute to the a quinone site. Position 214 (histidine 214) interacts with Fe cation. Residue histidine 271 coordinates Fe cation. The helical transmembrane segment at 273–287 (FLGAWPVVGIWFTSM) threads the bilayer. [CaMn4O5] cluster is bound by residues histidine 331, glutamate 332, aspartate 341, and alanine 343. A propeptide spanning residues 344–358 (TVESTPVALQAPAIG) is cleaved from the precursor.

This sequence belongs to the reaction center PufL/M/PsbA/D family. As to quaternary structure, PSII is composed of 1 copy each of membrane proteins PsbA, PsbB, PsbC, PsbD, PsbE, PsbF, PsbH, PsbI, PsbJ, PsbK, PsbL, PsbM, PsbT, PsbX, PsbY, PsbZ, Psb30/Ycf12, peripheral proteins PsbO, CyanoQ (PsbQ), PsbU, PsbV and a large number of cofactors. It forms dimeric complexes. Requires The D1/D2 heterodimer binds P680, chlorophylls that are the primary electron donor of PSII, and subsequent electron acceptors. It shares a non-heme iron and each subunit binds pheophytin, quinone, additional chlorophylls, carotenoids and lipids. D1 provides most of the ligands for the Mn4-Ca-O5 cluster of the oxygen-evolving complex (OEC). There is also a Cl(-1) ion associated with D1 and D2, which is required for oxygen evolution. The PSII complex binds additional chlorophylls, carotenoids and specific lipids. as cofactor. Tyr-160 forms a radical intermediate that is referred to as redox-active TyrZ, YZ or Y-Z. In terms of processing, C-terminally processed by CtpA; processing is essential to allow assembly of the oxygen-evolving complex and thus photosynthetic growth.

It localises to the cellular thylakoid membrane. It catalyses the reaction 2 a plastoquinone + 4 hnu + 2 H2O = 2 a plastoquinol + O2. Photosystem II (PSII) is a light-driven water:plastoquinone oxidoreductase that uses light energy to abstract electrons from H(2)O, generating O(2) and a proton gradient subsequently used for ATP formation. It consists of a core antenna complex that captures photons, and an electron transfer chain that converts photonic excitation into a charge separation. The D1/D2 (PsbA/PsbD) reaction center heterodimer binds P680, the primary electron donor of PSII as well as several subsequent electron acceptors. This chain is Photosystem II protein D1 2, found in Parasynechococcus marenigrum (strain WH8102).